Here is a 281-residue protein sequence, read N- to C-terminus: Pantothenate synthetase (281 aa).

Residue Met-30–His-37 coordinates ATP. His-37 functions as the Proton donor in the catalytic mechanism. Residue Gln-61 coordinates (R)-pantoate. Gln-61 contributes to the beta-alanine binding site. Gly-147–Asp-150 contributes to the ATP binding site. Gln-153 contacts (R)-pantoate. Residues Val-176 and Met-184–Arg-187 each bind ATP.

The protein belongs to the pantothenate synthetase family. In terms of assembly, homodimer.

The protein resides in the cytoplasm. The catalysed reaction is (R)-pantoate + beta-alanine + ATP = (R)-pantothenate + AMP + diphosphate + H(+). Its pathway is cofactor biosynthesis; (R)-pantothenate biosynthesis; (R)-pantothenate from (R)-pantoate and beta-alanine: step 1/1. In terms of biological role, catalyzes the condensation of pantoate with beta-alanine in an ATP-dependent reaction via a pantoyl-adenylate intermediate. The polypeptide is Pantothenate synthetase (Caldicellulosiruptor saccharolyticus (strain ATCC 43494 / DSM 8903 / Tp8T 6331)).